A 236-amino-acid polypeptide reads, in one-letter code: Lectin alpha chain (236 aa).

Residues Glu8 and Asp10 each contribute to the Mn(2+) site. Ca(2+) is bound by residues Asp10, Tyr12, Asn14, and Asp19. Tyr12 provides a ligand contact to a carbohydrate. Asp19, His24, and Ser34 together coordinate Mn(2+). Residue 99-100 (LY) coordinates a carbohydrate. Asp207 contacts Ca(2+). Arg227 is an a carbohydrate binding site.

This sequence belongs to the leguminous lectin family. As to quaternary structure, equilibrium between homodimer and homotetramer. Oligomerization is pH-dependent with homotetramers forming at pH 6.5 and above. The beta and gamma chains are produced by partial proteolytic processing of the lectin alpha chain by an asparaginyl endopeptidase. Mixture of 60% alpha lectin and 40% of its beta and gamma proteolytic fragments. Seed.

D-mannose/D-glucose-binding lectin. Has anti-inflammatory activity in rats. Induces histamine release in mast cells from rat. Induces lymphocyte proliferation and IFNG production. The sequence is that of Lectin alpha chain from Cratylia argentea (Cratylia floribunda).